The primary structure comprises 194 residues: uncharacterized protein (194 aa).

A signal peptide spans 1-24 (MRKFVAFFVIVALAALLAGCGGQG).

This is an uncharacterized protein from Archaeoglobus fulgidus (strain ATCC 49558 / DSM 4304 / JCM 9628 / NBRC 100126 / VC-16).